The chain runs to 92 residues: Large ribosomal subunit protein eL31 (92 aa).

S2 carries the N-acetylserine modification.

It belongs to the eukaryotic ribosomal protein eL31 family. As to quaternary structure, part of the 50S ribosomal subunit.

Binds to the 23S rRNA. Located at the polypeptide exit tunnel on the outside of the subunit. The polypeptide is Large ribosomal subunit protein eL31 (rpl31e) (Haloarcula marismortui (strain ATCC 43049 / DSM 3752 / JCM 8966 / VKM B-1809) (Halobacterium marismortui)).